A 273-amino-acid chain; its full sequence is Dermonecrotic toxin LhSicTox-alphaIA2avi (273 aa).

His-5 is a catalytic residue. Residues Glu-25 and Asp-27 each coordinate Mg(2+). Catalysis depends on His-41, which acts as the Nucleophile. 2 cysteine pairs are disulfide-bonded: Cys-45-Cys-51 and Cys-47-Cys-190. Position 85 (Asp-85) interacts with Mg(2+).

The protein belongs to the arthropod phospholipase D family. Class II subfamily. The cofactor is Mg(2+). As to expression, expressed by the venom gland.

It is found in the secreted. It carries out the reaction an N-(acyl)-sphingosylphosphocholine = an N-(acyl)-sphingosyl-1,3-cyclic phosphate + choline. The catalysed reaction is an N-(acyl)-sphingosylphosphoethanolamine = an N-(acyl)-sphingosyl-1,3-cyclic phosphate + ethanolamine. The enzyme catalyses a 1-acyl-sn-glycero-3-phosphocholine = a 1-acyl-sn-glycero-2,3-cyclic phosphate + choline. It catalyses the reaction a 1-acyl-sn-glycero-3-phosphoethanolamine = a 1-acyl-sn-glycero-2,3-cyclic phosphate + ethanolamine. In terms of biological role, dermonecrotic toxins cleave the phosphodiester linkage between the phosphate and headgroup of certain phospholipids (sphingolipid and lysolipid substrates), forming an alcohol (often choline) and a cyclic phosphate. This toxin acts on sphingomyelin (SM). It may also act on ceramide phosphoethanolamine (CPE), lysophosphatidylcholine (LPC) and lysophosphatidylethanolamine (LPE), but not on lysophosphatidylserine (LPS), and lysophosphatidylglycerol (LPG). It acts by transphosphatidylation, releasing exclusively cyclic phosphate products as second products. Induces dermonecrosis, hemolysis, increased vascular permeability, edema, inflammatory response, and platelet aggregation. This chain is Dermonecrotic toxin LhSicTox-alphaIA2avi, found in Loxosceles hirsuta (Recluse spider).